We begin with the raw amino-acid sequence, 441 residues long: Methionine gamma-lyase (441 aa).

The disordered stretch occupies residues 1 to 25; it reads MAHFLETQEPLVFSGKKRNDRDDED. N6-(pyridoxal phosphate)lysine is present on K248.

It belongs to the trans-sulfuration enzymes family. Homotetramer. Pyridoxal 5'-phosphate is required as a cofactor. In terms of tissue distribution, expressed in roots, stems, siliques, leaves, flowers and seeds after imbibition (at protein level). Transcripts accumulate in dry mature seeds, but at protein level, only present upon imbibition.

The protein localises to the cytoplasm. The enzyme catalyses L-methionine + H2O = methanethiol + 2-oxobutanoate + NH4(+). Catalyzes the degradation of L-methionine to alpha-ketobutyrate, methanethiol and ammonia. Exhibits a high activity toward L-methionine, L-ethionine, L-homocysteine and seleno-L-methionine, but not L-cysteine. Involved in an alternative cysteine biosynthesis pathway to the reverse trans-sulfuration pathway (methionine-&gt;homocysteine-&gt;cystathionine-&gt;cysteine) in which methanethiol is an intermediate. Also mediates an alternative isoleucine biosynthesis pathway in which 2-ketobutyrate is an intermediate. The protein is Methionine gamma-lyase (MGL) of Arabidopsis thaliana (Mouse-ear cress).